A 237-amino-acid polypeptide reads, in one-letter code: Ribosomal RNA small subunit methyltransferase G (237 aa).

S-adenosyl-L-methionine-binding positions include Gly78, Phe83, 129-130, and Arg148; that span reads AE.

This sequence belongs to the methyltransferase superfamily. RNA methyltransferase RsmG family.

Its subcellular location is the cytoplasm. Specifically methylates the N7 position of a guanine in 16S rRNA. The chain is Ribosomal RNA small subunit methyltransferase G from Streptococcus thermophilus (strain CNRZ 1066).